Consider the following 456-residue polypeptide: Nitrogenase molybdenum-iron protein beta chain (456 aa).

[8Fe-7S] cluster-binding residues include cysteine 23, cysteine 48, cysteine 106, and serine 141.

The protein belongs to the NifD/NifK/NifE/NifN family. In terms of assembly, tetramer of two alpha and two beta chains. Forms complex with the iron protein (nitrogenase component 2). [8Fe-7S] cluster serves as cofactor.

The enzyme catalyses N2 + 8 reduced [2Fe-2S]-[ferredoxin] + 16 ATP + 16 H2O = H2 + 8 oxidized [2Fe-2S]-[ferredoxin] + 2 NH4(+) + 16 ADP + 16 phosphate + 6 H(+). In terms of biological role, this molybdenum-iron protein is part of the nitrogenase complex that catalyzes the key enzymatic reactions in nitrogen fixation. The chain is Nitrogenase molybdenum-iron protein beta chain (nifK2) from Methanosarcina barkeri.